Reading from the N-terminus, the 340-residue chain is Fructoselysine 6-phosphate deglycase (340 aa).

SIS domains are found at residues 35–169 and 201–331; these read IVEE…RLAP and LGEL…PDER.

In terms of assembly, homododecamer.

The enzyme catalyses N(6)-(6-phospho-D-fructosyl)-L-lysine + H2O = D-glucose 6-phosphate + L-lysine. The protein operates within carbohydrate metabolism; fructoselysine degradation; D-glucose 6-phosphate and lysine from fructoselysine: step 2/2. Strongly inhibited by ZnCl(2). Functionally, catalyzes the reversible conversion of fructoselysine 6-phosphate to glucose 6-phosphate and lysine. Functions in a fructoselysine degradation pathway that allows E.coli to grow on fructoselysine or psicoselysine. This chain is Fructoselysine 6-phosphate deglycase, found in Escherichia coli (strain K12).